A 666-amino-acid chain; its full sequence is tRNA 5-methylaminomethyl-2-thiouridine biosynthesis bifunctional protein MnmC (666 aa).

The interval 1-245 (MKQYAIQPAT…KREMLCGVME (245 aa)) is tRNA (mnm(5)s(2)U34)-methyltransferase. Residues 270-666 (IGGGIASALL…RKLLKGKAVK (397 aa)) are FAD-dependent cmnm(5)s(2)U34 oxidoreductase.

This sequence in the N-terminal section; belongs to the methyltransferase superfamily. tRNA (mnm(5)s(2)U34)-methyltransferase family. The protein in the C-terminal section; belongs to the DAO family. The cofactor is FAD.

The protein localises to the cytoplasm. It catalyses the reaction 5-aminomethyl-2-thiouridine(34) in tRNA + S-adenosyl-L-methionine = 5-methylaminomethyl-2-thiouridine(34) in tRNA + S-adenosyl-L-homocysteine + H(+). Functionally, catalyzes the last two steps in the biosynthesis of 5-methylaminomethyl-2-thiouridine (mnm(5)s(2)U) at the wobble position (U34) in tRNA. Catalyzes the FAD-dependent demodification of cmnm(5)s(2)U34 to nm(5)s(2)U34, followed by the transfer of a methyl group from S-adenosyl-L-methionine to nm(5)s(2)U34, to form mnm(5)s(2)U34. The protein is tRNA 5-methylaminomethyl-2-thiouridine biosynthesis bifunctional protein MnmC of Salmonella paratyphi A (strain ATCC 9150 / SARB42).